Here is a 344-residue protein sequence, read N- to C-terminus: Uroporphyrinogen decarboxylase (344 aa).

Substrate-binding positions include 25–29 (RQAGR), aspartate 75, tyrosine 152, serine 207, and histidine 323.

It belongs to the uroporphyrinogen decarboxylase family. Homodimer.

It is found in the cytoplasm. The catalysed reaction is uroporphyrinogen III + 4 H(+) = coproporphyrinogen III + 4 CO2. It functions in the pathway porphyrin-containing compound metabolism; protoporphyrin-IX biosynthesis; coproporphyrinogen-III from 5-aminolevulinate: step 4/4. Catalyzes the decarboxylation of four acetate groups of uroporphyrinogen-III to yield coproporphyrinogen-III. In Ruegeria pomeroyi (strain ATCC 700808 / DSM 15171 / DSS-3) (Silicibacter pomeroyi), this protein is Uroporphyrinogen decarboxylase.